The chain runs to 781 residues: Pyrin (781 aa).

Positions methionine 1–glutamine 92 constitute a Pyrin domain. Polar residues predominate over residues glutamate 93 to glycine 111. The interval glutamate 93–cysteine 226 is disordered. A compositionally biased stretch (basic and acidic residues) spans asparagine 113–glycine 126. Residues leucine 153 to glutamate 163 show a composition bias toward basic residues. Serine 242 is subject to Phosphoserine. Residues lysine 266–arginine 280 are interaction with RELA. Disordered stretches follow at residues asparagine 270–proline 322 and glutamate 336–proline 373. The B box-type zinc finger occupies glutamine 370–isoleucine 412. The stretch at glutamate 413–serine 442 forms a coiled coil. The short motif at lysine 420 to glycine 437 is the Nuclear localization signal element. Residues lysine 420–methionine 582 are required for homotrimerization and induction of pyroptosomes. The B30.2/SPRY domain occupies serine 580–valine 775.

In terms of assembly, homotrimer. Interacts (via the B box-type zinc finger) with PSTPIP1. Interacts (via the B30.2/SPRY domain) with several components of the inflammasome complex, including CASP1 p20 and p10 subunits, CASP5, PYCARD, NLRP1, NLRP2 and NLRP3, as well as with unprocessed IL1B; this interaction may lead to autophagic degradation of these proteins. Component of the AIM2 PANoptosome complex, a multiprotein complex that drives inflammatory cell death (PANoptosis). Interacts with NFKBIA and RELA. Interacts weakly with VASP and ACTR3. Interacts with active ULK1 (phosphorylated on 'Ser-317') and BECN1 simultaneously. Also interacts with ATG16L1 (via WD repeats), and with ATG8 family members, including GABARAP, GABARAPL1 and, to a lesser extent, GABARAPL2, MAP1LC3A/LC3A and MAP1LC3C/LC3C. Interacts with TRIM21. Interacts with YWHAB, YWHAE, YWHAG, YWHAH, YWHAQ and YWHAZ; the interaction is required for the down-regulation of pyrin pro-inflammatory activity. In terms of processing, cleaved by CASP1. The N-terminal cleavage product localizes to the nucleus as a filamentous network and to the cytoplasm, interacts more strongly with RELA and NFKBIA than the full-length protein, enhances the nuclear localization of RELA and induces NFKBIA proteolysis. The C-terminal cleavage product localizes to the cytoplasm. Post-translationally, phosphorylation at Ser-242 is required for the interaction with 14-3-3 proteins and down-regulation of pyrin pro-inflammatory activity. Degraded along with the delivery of its substrates to autolysosomal compartments (at protein level). As to expression, expressed in peripheral blood leukocytes, particularly in mature granulocytes and to a lesser extent in monocytes but not in lymphocytes. Detected in spleen, lung and muscle, probably as a result of leukocyte infiltration in these tissues. Not expressed in thymus, prostate, testis, ovary, small intestine, colon, heart, brain, placenta, liver, kidney, pancreas. Expression detected in several myeloid leukemic, colon cancer, and prostate cancer cell lines.

It is found in the cytoplasm. It localises to the cytoskeleton. The protein localises to the cell projection. The protein resides in the ruffle. Its subcellular location is the lamellipodium. It is found in the nucleus. It localises to the cytoplasmic vesicle. The protein localises to the autophagosome. Its function is as follows. Involved in the regulation of innate immunity and the inflammatory response in response to IFNG/IFN-gamma. Organizes autophagic machinery by serving as a platform for the assembly of ULK1, Beclin 1/BECN1, ATG16L1, and ATG8 family members and recognizes specific autophagy targets, thus coordinating target recognition with assembly of the autophagic apparatus and initiation of autophagy. Acts as an autophagy receptor for the degradation of several inflammasome components, including CASP1, NLRP1 and NLRP3, hence preventing excessive IL1B- and IL18-mediated inflammation. However, it can also have a positive effect in the inflammatory pathway, acting as an innate immune sensor that triggers PYCARD/ASC specks formation, caspase-1 activation, and IL1B and IL18 production. Together with AIM2, also acts as a mediator of pyroptosis, necroptosis and apoptosis (PANoptosis), an integral part of host defense against pathogens, in response to bacterial infection. It is required for PSTPIP1-induced PYCARD/ASC oligomerization and inflammasome formation. Recruits PSTPIP1 to inflammasomes, and is required for PSTPIP1 oligomerization. This chain is Pyrin, found in Homo sapiens (Human).